Consider the following 208-residue polypeptide: Outer-membrane lipoprotein LolB (208 aa).

An N-terminal signal peptide occupies residues M1–G17. C18 carries N-palmitoyl cysteine lipidation. C18 carries S-diacylglycerol cysteine lipidation.

It belongs to the LolB family. In terms of assembly, monomer.

It localises to the cell outer membrane. Functionally, plays a critical role in the incorporation of lipoproteins in the outer membrane after they are released by the LolA protein. The sequence is that of Outer-membrane lipoprotein LolB from Marinobacter nauticus (strain ATCC 700491 / DSM 11845 / VT8) (Marinobacter aquaeolei).